The primary structure comprises 354 residues: Phenylalanine--tRNA ligase alpha subunit (354 aa).

Mg(2+) is bound at residue glutamate 279.

It belongs to the class-II aminoacyl-tRNA synthetase family. Phe-tRNA synthetase alpha subunit type 1 subfamily. In terms of assembly, tetramer of two alpha and two beta subunits. Mg(2+) is required as a cofactor.

It localises to the cytoplasm. The enzyme catalyses tRNA(Phe) + L-phenylalanine + ATP = L-phenylalanyl-tRNA(Phe) + AMP + diphosphate + H(+). The chain is Phenylalanine--tRNA ligase alpha subunit from Cupriavidus pinatubonensis (strain JMP 134 / LMG 1197) (Cupriavidus necator (strain JMP 134)).